Consider the following 112-residue polypeptide: Cornifelin homolog (112 aa).

The protein belongs to the cornifelin family.

The sequence is that of Cornifelin homolog (cnfn) from Danio rerio (Zebrafish).